The sequence spans 95 residues: Putative pterin-4-alpha-carbinolamine dehydratase (95 aa).

This sequence belongs to the pterin-4-alpha-carbinolamine dehydratase family.

The catalysed reaction is (4aS,6R)-4a-hydroxy-L-erythro-5,6,7,8-tetrahydrobiopterin = (6R)-L-erythro-6,7-dihydrobiopterin + H2O. The chain is Putative pterin-4-alpha-carbinolamine dehydratase from Thermosynechococcus vestitus (strain NIES-2133 / IAM M-273 / BP-1).